The following is a 530-amino-acid chain: PTS system maltose-specific EIICB component (530 aa).

Residues 1–431 (MTAKTAPKVT…FNLKTPGRDS (431 aa)) enclose the PTS EIIC type-1 domain. 10 helical membrane passes run 22–42 (FMLPVALLSFCGIMLGIGSSL), 69–89 (IGSFAFSFLPVMFCIAIPLGL), 96–116 (VAAFAGFIGYAVMNLAVNFWL), 138–158 (ILGIQSIDTGILGAVIAGIIV), 189–209 (LVMGLVGLVIPLVWPIFAMGI), 289–309 (FLSQGKMPAFLGGLPGAALAM), 321–341 (IKGLLISGLIACVVGGTTEPL), 343–363 (FLFLFVAPVLYVIHALLTGLG), 369–389 (VLGVTIGNTDGNIIDFVVFGI), and 399–419 (MVPVVAAIWFVVYYVIFRFAI). The 82-residue stretch at 449–530 (GYNVPAILEA…MAGLMHTVQA (82 aa)) folds into the PTS EIIB type-1 domain. C471 functions as the Phosphocysteine intermediate; for EIIB activity in the catalytic mechanism.

The protein localises to the cell inner membrane. The enzyme catalyses D-maltose(out) + N(pros)-phospho-L-histidyl-[protein] = alpha-maltose 6'-phosphate(in) + L-histidyl-[protein]. The phosphoenolpyruvate-dependent sugar phosphotransferase system (sugar PTS), a major carbohydrate active transport system, catalyzes the phosphorylation of incoming sugar substrates concomitantly with their translocation across the cell membrane. This system is involved in maltose transport. MalX can also recognize and transport glucose even though this sugar may not represent the natural substrate of the system. This Escherichia coli (strain K12) protein is PTS system maltose-specific EIICB component.